Here is a 187-residue protein sequence, read N- to C-terminus: Adenine phosphoribosyltransferase (187 aa).

An AMP-binding site is contributed by 133–137 (ATGGS).

Belongs to the purine/pyrimidine phosphoribosyltransferase family. Homodimer. It depends on Mg(2+) as a cofactor.

The protein localises to the cytoplasm. It localises to the nucleus. The enzyme catalyses AMP + diphosphate = 5-phospho-alpha-D-ribose 1-diphosphate + adenine. The protein operates within purine metabolism; AMP biosynthesis via salvage pathway; AMP from adenine: step 1/1. Catalyzes a salvage reaction resulting in the formation of AMP, that is energically less costly than de novo synthesis. In Eremothecium gossypii (strain ATCC 10895 / CBS 109.51 / FGSC 9923 / NRRL Y-1056) (Yeast), this protein is Adenine phosphoribosyltransferase (APT1).